An 83-amino-acid polypeptide reads, in one-letter code: Exodeoxyribonuclease 7 small subunit (83 aa).

Belongs to the XseB family. In terms of assembly, heterooligomer composed of large and small subunits.

It localises to the cytoplasm. The enzyme catalyses Exonucleolytic cleavage in either 5'- to 3'- or 3'- to 5'-direction to yield nucleoside 5'-phosphates.. Functionally, bidirectionally degrades single-stranded DNA into large acid-insoluble oligonucleotides, which are then degraded further into small acid-soluble oligonucleotides. The polypeptide is Exodeoxyribonuclease 7 small subunit (Moorella thermoacetica (strain ATCC 39073 / JCM 9320)).